A 250-amino-acid chain; its full sequence is ATP synthase subunit a (250 aa).

5 consecutive transmembrane segments (helical) span residues 27 to 47 (TDTV…AFYL), 83 to 103 (IAPF…ISNW), 129 to 149 (INYV…AGIW), 191 to 211 (IFAG…IMWA), and 219 to 239 (FDLF…ILYF).

The protein belongs to the ATPase A chain family. As to quaternary structure, F-type ATPases have 2 components, CF(1) - the catalytic core - and CF(0) - the membrane proton channel. CF(1) has five subunits: alpha(3), beta(3), gamma(1), delta(1), epsilon(1). CF(0) has three main subunits: a(1), b(2) and c(9-12). The alpha and beta chains form an alternating ring which encloses part of the gamma chain. CF(1) is attached to CF(0) by a central stalk formed by the gamma and epsilon chains, while a peripheral stalk is formed by the delta and b chains.

The protein resides in the cell membrane. In terms of biological role, key component of the proton channel; it plays a direct role in the translocation of protons across the membrane. In Mycobacterium marinum (strain ATCC BAA-535 / M), this protein is ATP synthase subunit a.